The chain runs to 237 residues: Uridylate kinase (237 aa).

11–14 (KLSG) is an ATP binding site. Residue glycine 53 coordinates UMP. Positions 54 and 58 each coordinate ATP. UMP-binding positions include aspartate 73 and 134–141 (TGNPFFTT). Residues threonine 161, tyrosine 167, and aspartate 170 each contribute to the ATP site.

This sequence belongs to the UMP kinase family. In terms of assembly, homohexamer.

The protein localises to the cytoplasm. The catalysed reaction is UMP + ATP = UDP + ADP. The protein operates within pyrimidine metabolism; CTP biosynthesis via de novo pathway; UDP from UMP (UMPK route): step 1/1. With respect to regulation, inhibited by UTP. Functionally, catalyzes the reversible phosphorylation of UMP to UDP. This Burkholderia lata (strain ATCC 17760 / DSM 23089 / LMG 22485 / NCIMB 9086 / R18194 / 383) protein is Uridylate kinase.